Reading from the N-terminus, the 81-residue chain is MASLKVFSFALILVLTFSVDVEGYNVESGGSLCCNNHPKFGKCNTNNDNQRCNRWCHNGCGNGKGDYCKAMSHGGLCHCYC.

An N-terminal signal peptide occupies residues 1 to 23; it reads MASLKVFSFALILVLTFSVDVEG. 4 cysteine pairs are disulfide-bonded: cysteine 33–cysteine 81, cysteine 43–cysteine 68, cysteine 52–cysteine 77, and cysteine 56–cysteine 79.

Belongs to the DEFL family.

It localises to the secreted. This Arabidopsis thaliana (Mouse-ear cress) protein is Putative defensin-like protein 25.